A 618-amino-acid polypeptide reads, in one-letter code: Proline--tRNA ligase (618 aa).

It belongs to the class-II aminoacyl-tRNA synthetase family. ProS type 1 subfamily. In terms of assembly, homodimer.

The protein localises to the cytoplasm. The enzyme catalyses tRNA(Pro) + L-proline + ATP = L-prolyl-tRNA(Pro) + AMP + diphosphate. Its function is as follows. Catalyzes the attachment of proline to tRNA(Pro) in a two-step reaction: proline is first activated by ATP to form Pro-AMP and then transferred to the acceptor end of tRNA(Pro). As ProRS can inadvertently accommodate and process non-cognate amino acids such as alanine and cysteine, to avoid such errors it has two additional distinct editing activities against alanine. One activity is designated as 'pretransfer' editing and involves the tRNA(Pro)-independent hydrolysis of activated Ala-AMP. The other activity is designated 'posttransfer' editing and involves deacylation of mischarged Ala-tRNA(Pro). The misacylated Cys-tRNA(Pro) is not edited by ProRS. In Streptococcus pyogenes serotype M3 (strain ATCC BAA-595 / MGAS315), this protein is Proline--tRNA ligase.